The chain runs to 220 residues: Nitrile hydratase subunit beta (220 aa).

Belongs to the nitrile hydratase subunit beta family. Heterodimer of an alpha and a beta chain.

The catalysed reaction is an aliphatic primary amide = an aliphatic nitrile + H2O. In terms of biological role, NHase catalyzes the hydration of various nitrile compounds to the corresponding amides. This chain is Nitrile hydratase subunit beta (nthB), found in Pseudomonas chlororaphis (Pseudomonas aureofaciens).